The chain runs to 268 residues: tRNA pseudouridine synthase A (268 aa).

The Nucleophile role is filled by Asp52. Residue Tyr110 coordinates substrate.

This sequence belongs to the tRNA pseudouridine synthase TruA family. Homodimer.

The catalysed reaction is uridine(38/39/40) in tRNA = pseudouridine(38/39/40) in tRNA. Formation of pseudouridine at positions 38, 39 and 40 in the anticodon stem and loop of transfer RNAs. In Prochlorococcus marinus (strain MIT 9515), this protein is tRNA pseudouridine synthase A.